A 307-amino-acid polypeptide reads, in one-letter code: Transaldolase (307 aa).

Lys-125 acts as the Schiff-base intermediate with substrate in catalysis.

The protein belongs to the transaldolase family. Type 1 subfamily.

The protein resides in the cytoplasm. The enzyme catalyses D-sedoheptulose 7-phosphate + D-glyceraldehyde 3-phosphate = D-erythrose 4-phosphate + beta-D-fructose 6-phosphate. It participates in carbohydrate degradation; pentose phosphate pathway; D-glyceraldehyde 3-phosphate and beta-D-fructose 6-phosphate from D-ribose 5-phosphate and D-xylulose 5-phosphate (non-oxidative stage): step 2/3. Its function is as follows. Transaldolase is important for the balance of metabolites in the pentose-phosphate pathway. The chain is Transaldolase from Pseudomonas aeruginosa (strain ATCC 15692 / DSM 22644 / CIP 104116 / JCM 14847 / LMG 12228 / 1C / PRS 101 / PAO1).